Consider the following 636-residue polypeptide: TNFAIP3-interacting protein 1 (636 aa).

A coiled-coil region spans residues 20–73 (EASAAFERLVKENSRLKEKMQGIKMLGELLEESQMEATRLRQKAEELVKDNELL). Basic and acidic residues predominate over residues 61 to 71 (QKAEELVKDNE). Disordered regions lie at residues 61 to 151 (QKAE…GPLP) and 252 to 283 (MSNG…QQQA). A Phosphoserine modification is found at S77. The interaction with Nef stretch occupies residues 94-412 (SNVTASPTAP…SPLTRQREYQ (319 aa)). The span at 131 to 142 (EEQNSPESSSHA) shows a compositional bias: polar residues. The stretch at 196–258 (SKVHKNEQRT…KLLMSNGNKE (63 aa)) forms a coiled coil. S284 carries the phosphoserine modification. Residues 294–535 (VALGAAEKKV…RKAKASGERY (242 aa)) adopt a coiled-coil conformation. The tract at residues 351–367 (DLEAEREQKQRDFDRKL) is interaction with Shigella flexneri ipah9.8. Phosphoserine is present on S403. Residues 431-588 (TPPSSPPTAF…MEHPPPLPNS (158 aa)) form a required for inhibitory activity of TNF-induced NF-kappa-B activation region. At T438 the chain carries Phosphothreonine. S442 bears the Phosphoserine mark. Residues 452 to 510 (KQELVTQNELLKQQVKIFEEDFQRERSDRERMNEEKEELKKQVEKLQAQVTLSNAQLKA) form a ubiquitin-binding domain (UBD) region. Positions 524 to 530 (QKRKAKA) match the Nuclear localization signal motif. Y552 is modified (phosphotyrosine). R571 is modified (asymmetric dimethylarginine). R599 carries the post-translational modification Asymmetric dimethylarginine; alternate. R599 carries the post-translational modification Omega-N-methylarginine; alternate. Residues 603–636 (GGVRNPNQSSQVMDPPTARPTEPESPKNDREGPQ) are disordered. Over residues 623 to 636 (TEPESPKNDREGPQ) the composition is skewed to basic and acidic residues. S627 carries the phosphoserine modification.

As to quaternary structure, interacts with TNFAIP3 and IKBKG (polyubiquitinated); facilitates TNFAIP3-mediated de-ubiquitination of NEMO/IKBKG. Interacts with polyubiquitin. Interacts with MAPK1, SELPLG and PIK3CD. Interacts with IRAK1 (polyubiquitinated). Interacts with MYD88; the interaction is indicative for participation in an activated TLR-signaling complex. Interacts with HIV-1 matrix protein. Interacts with TAX1BP1. (Microbial infection) Interacts with Shigella flexneri ipah9.8; the interaction promotes polyubiquitination of IKBKG. In terms of processing, phosphorylation at Tyr-552 by SRC-family kinases recruits phosphoinositide-3-kinase (PI3K) PIK3CD:p85 heterodimer which results in integrin activation and leukocyte adhesion to activated endothelium during inflammation. In terms of tissue distribution, ubiquitous. Strongly expressed in peripheral blood lymphocytes, spleen and skeletal muscle, and is weakly expressed in the brain. In peripheral blood mononucleocytes, isoform 4 is mainly expressed and isoform 1 and isoform 7 are almost not expressed. Expression of isoform 1 and isoform 7 increases in leukemic cells.

The protein localises to the cytoplasm. Its subcellular location is the nucleus. Functionally, inhibits NF-kappa-B activation and TNF-induced NF-kappa-B-dependent gene expression by regulating TAX1BP1 and A20/TNFAIP3-mediated deubiquitination of IKBKG; proposed to link A20/TNFAIP3 to ubiquitinated IKBKG. Involved in regulation of EGF-induced ERK1/ERK2 signaling pathway; blocks MAPK3/MAPK1 nuclear translocation and MAPK1-dependent transcription. Increases cell surface CD4(T4) antigen expression. Involved in the anti-inflammatory response of macrophages and positively regulates TLR-induced activation of CEBPB. Involved in the prevention of autoimmunity; this function implicates binding to polyubiquitin. Involved in leukocyte integrin activation during inflammation; this function is mediated by association with SELPLG and dependent on phosphorylation by SRC-family kinases. Interacts with HIV-1 matrix protein and is packaged into virions and overexpression can inhibit viral replication. May regulate matrix nuclear localization, both nuclear import of PIC (Preintegration complex) and export of GAG polyprotein and viral genomic RNA during virion production. In case of infection, promotes association of IKBKG with Shigella flexneri E3 ubiquitin-protein ligase ipah9.8 p which in turn promotes polyubiquitination of IKBKG leading to its proteasome-dependent degradation and thus is perturbing NF-kappa-B activation during bacterial infection. In Homo sapiens (Human), this protein is TNFAIP3-interacting protein 1 (TNIP1).